Here is a 339-residue protein sequence, read N- to C-terminus: Ketol-acid reductoisomerase (NADP(+)) (339 aa).

Positions 1–182 (MRVYYDRDAD…GGGRSGIIET (182 aa)) constitute a KARI N-terminal Rossmann domain. NADP(+)-binding positions include 24-27 (YGSQ), Lys48, Ser51, Thr53, and 83-86 (DELQ). His108 is a catalytic residue. Gly134 contributes to the NADP(+) binding site. The 146-residue stretch at 183-328 (NFKEECETDL…AKLRGMMPWI (146 aa)) folds into the KARI C-terminal knotted domain. The Mg(2+) site is built by Asp191, Glu195, Glu227, and Glu231. Residue Ser252 coordinates substrate.

The protein belongs to the ketol-acid reductoisomerase family. The cofactor is Mg(2+).

The enzyme catalyses (2R)-2,3-dihydroxy-3-methylbutanoate + NADP(+) = (2S)-2-acetolactate + NADPH + H(+). The catalysed reaction is (2R,3R)-2,3-dihydroxy-3-methylpentanoate + NADP(+) = (S)-2-ethyl-2-hydroxy-3-oxobutanoate + NADPH + H(+). It participates in amino-acid biosynthesis; L-isoleucine biosynthesis; L-isoleucine from 2-oxobutanoate: step 2/4. It functions in the pathway amino-acid biosynthesis; L-valine biosynthesis; L-valine from pyruvate: step 2/4. In terms of biological role, involved in the biosynthesis of branched-chain amino acids (BCAA). Catalyzes an alkyl-migration followed by a ketol-acid reduction of (S)-2-acetolactate (S2AL) to yield (R)-2,3-dihydroxy-isovalerate. In the isomerase reaction, S2AL is rearranged via a Mg-dependent methyl migration to produce 3-hydroxy-3-methyl-2-ketobutyrate (HMKB). In the reductase reaction, this 2-ketoacid undergoes a metal-dependent reduction by NADPH to yield (R)-2,3-dihydroxy-isovalerate. This Sinorhizobium fredii (strain NBRC 101917 / NGR234) protein is Ketol-acid reductoisomerase (NADP(+)).